The following is a 338-amino-acid chain: uncharacterized protein (338 aa).

A signal peptide spans 1–29; that stretch reads MIKQLYKNITICSLTISTALTVFPATSYA.

Belongs to the aerolysin family.

This is an uncharacterized protein from Staphylococcus aureus (strain bovine RF122 / ET3-1).